A 131-amino-acid polypeptide reads, in one-letter code: UPF0102 protein RPD_0400 (131 aa).

Belongs to the UPF0102 family.

The sequence is that of UPF0102 protein RPD_0400 from Rhodopseudomonas palustris (strain BisB5).